The sequence spans 318 residues: Methionyl-tRNA formyltransferase (318 aa).

Residue 112-115 (SILP) participates in (6S)-5,6,7,8-tetrahydrofolate binding.

It belongs to the Fmt family.

The catalysed reaction is L-methionyl-tRNA(fMet) + (6R)-10-formyltetrahydrofolate = N-formyl-L-methionyl-tRNA(fMet) + (6S)-5,6,7,8-tetrahydrofolate + H(+). In terms of biological role, attaches a formyl group to the free amino group of methionyl-tRNA(fMet). The formyl group appears to play a dual role in the initiator identity of N-formylmethionyl-tRNA by promoting its recognition by IF2 and preventing the misappropriation of this tRNA by the elongation apparatus. The sequence is that of Methionyl-tRNA formyltransferase from Haemophilus influenzae (strain PittEE).